Reading from the N-terminus, the 188-residue chain is MNGDDTFARRPTVGAQIPEKIQKAFDDIAKYFSKEEWEKMKVSEKIVYVYMKRKYEAMTKLGFKAILPSFMRNKRVTDFQGNDFDNDPNRGNQVQRPQMTFGRLQGIFPKIMPKKPAEEGNVSKEVPEASGPQNDGKQLCPPGKPTTSEKINMISGPKRGEHAWTHRLRERKQLVIYEEISDPEEDDE.

The 64-residue stretch at 20 to 83 (KIQKAFDDIA…KRVTDFQGND (64 aa)) folds into the KRAB-related domain. Positions 113-162 (PKKPAEEGNVSKEVPEASGPQNDGKQLCPPGKPTTSEKINMISGPKRGEH) are disordered. Positions 115 to 127 (KPAEEGNVSKEVP) are enriched in basic and acidic residues. Phosphoserine is present on S123.

This sequence belongs to the SSX family. Interacts with SSX2IP.

In terms of biological role, could act as a modulator of transcription. The polypeptide is Protein SSX3 (SSX3) (Homo sapiens (Human)).